Reading from the N-terminus, the 281-residue chain is MAARVLLARGGLLRPAAQSAFLPGLRTVTSSSHRAREDSWLKSLFVRKVDPRKDAHSNLLAKKETSSLYKLQFHNVKPECLDAYNKICQEVLPKIHEGKQYPCTLVGTWNTWYGEQDQAVHLWRYEGGYPALTEVMNKLKENQEFVNFRKARSDMLLSRKNQLLLEFSFWNEPVPRPGPNIYELRSYQLRPGTMIEWGNYWARAIRFRQDSNEAIGGFFSQIGQLYMVDHLWAYRDLQTREDIRNAAWHKHGWEELVYYTVPLIQEMESRIMIPLKTSPLQ.

Residues 1-27 constitute a mitochondrion transit peptide; it reads MAARVLLARGGLLRPAAQSAFLPGLRT.

The protein belongs to the NipSnap family. In terms of assembly, interacts with CALCOCO2/NDP52, NBR1, SQSTM1/p62, TAX1BP1 and WDFY3/ALFY. Interacts with ATG8 family proteins (MAP1LC3A, MAP1LC3B, MAP1LC3C, GABARAP, GABARAPL1 and GABARAPL2). Interacts with VDAC1.

It is found in the mitochondrion matrix. It localises to the cytoplasm. Its function is as follows. Protein involved in mitophagy by facilitating recruitment of the autophagy machinery required for clearance of damaged mitochondria. Accumulates on the mitochondria surface in response to mitochondrial depolarization and acts as a 'eat me' signal by recruiting proteins involved in selective autophagy, such as autophagy receptors (CALCOCO2/NDP52, NBR1, SQSTM1/p62, TAX1BP1 and WDFY3/ALFY) and ATG8 family proteins (MAP1LC3A, MAP1LC3B, MAP1LC3C, GABARAP, GABARAPL1 and GABARAPL2). May act as a positive regulator of L-type calcium channels. The chain is Protein NipSnap homolog 2 from Mus musculus (Mouse).